The following is a 133-amino-acid chain: Small ribosomal subunit protein uS9 (133 aa).

The tract at residues 97-133 (MKQELKSQGFLTRDPRKKERKKYGRKKARKSFQFSKR) is disordered. Residues 114–133 (KERKKYGRKKARKSFQFSKR) show a composition bias toward basic residues.

It belongs to the universal ribosomal protein uS9 family.

The sequence is that of Small ribosomal subunit protein uS9 (rpsI) from Chlamydia muridarum (strain MoPn / Nigg).